The following is a 231-amino-acid chain: Cytochrome c oxidase subunit 2 (231 aa).

Topologically, residues 1–30 (MNNFFQGYNLLFQHSLFASYMDWFHSFNCS) are mitochondrial intermembrane. A helical membrane pass occupies residues 31-52 (LLLGVLVFVTLLFGYLIFGTFY). At 53–69 (FKSKKIEYQFGELLCSI) the chain is on the mitochondrial matrix side. The chain crosses the membrane as a helical span at residues 70–89 (FPTIILLMQMVPSLSLLYYY). The Mitochondrial intermembrane segment spans residues 90–231 (GLMNLDSNLT…FKSWCFGTME (142 aa)). Cu cation-binding residues include His164, Cys199, Glu201, Cys203, His207, and Met210. Residue Glu201 participates in Mg(2+) binding.

It belongs to the cytochrome c oxidase subunit 2 family. As to quaternary structure, component of the cytochrome c oxidase (complex IV, CIV), a multisubunit enzyme composed of a catalytic core of 3 subunits and several supernumerary subunits. The complex exists as a monomer or a dimer and forms supercomplexes (SCs) in the inner mitochondrial membrane with ubiquinol-cytochrome c oxidoreductase (cytochrome b-c1 complex, complex III, CIII). Requires Cu cation as cofactor.

Its subcellular location is the mitochondrion inner membrane. It carries out the reaction 4 Fe(II)-[cytochrome c] + O2 + 8 H(+)(in) = 4 Fe(III)-[cytochrome c] + 2 H2O + 4 H(+)(out). Component of the cytochrome c oxidase, the last enzyme in the mitochondrial electron transport chain which drives oxidative phosphorylation. The respiratory chain contains 3 multisubunit complexes succinate dehydrogenase (complex II, CII), ubiquinol-cytochrome c oxidoreductase (cytochrome b-c1 complex, complex III, CIII) and cytochrome c oxidase (complex IV, CIV), that cooperate to transfer electrons derived from NADH and succinate to molecular oxygen, creating an electrochemical gradient over the inner membrane that drives transmembrane transport and the ATP synthase. Cytochrome c oxidase is the component of the respiratory chain that catalyzes the reduction of oxygen to water. Electrons originating from reduced cytochrome c in the intermembrane space (IMS) are transferred via the dinuclear copper A center (CU(A)) of subunit 2 and heme A of subunit 1 to the active site in subunit 1, a binuclear center (BNC) formed by heme A3 and copper B (CU(B)). The BNC reduces molecular oxygen to 2 water molecules using 4 electrons from cytochrome c in the IMS and 4 protons from the mitochondrial matrix. The chain is Cytochrome c oxidase subunit 2 from Caenorhabditis elegans.